Consider the following 24-residue polypeptide: Cytochrome c oxidase subunit 5A-2, mitochondrial (24 aa).

Belongs to the cytochrome c oxidase subunit 5A family. Component of the cytochrome c oxidase (complex IV, CIV), a multisubunit enzyme composed of 14 subunits. The complex is composed of a catalytic core of 3 subunits MT-CO1, MT-CO2 and MT-CO3, encoded in the mitochondrial DNA, and 11 supernumerary subunits COX4I, COX5A, COX5B, COX6A, COX6B, COX6C, COX7A, COX7B, COX7C, COX8 and NDUFA4, which are encoded in the nuclear genome. The complex exists as a monomer or a dimer and forms supercomplexes (SCs) in the inner mitochondrial membrane with NADH-ubiquinone oxidoreductase (complex I, CI) and ubiquinol-cytochrome c oxidoreductase (cytochrome b-c1 complex, complex III, CIII), resulting in different assemblies (supercomplex SCI(1)III(2)IV(1) and megacomplex MCI(2)III(2)IV(2)).

Its subcellular location is the mitochondrion inner membrane. It functions in the pathway energy metabolism; oxidative phosphorylation. Component of the cytochrome c oxidase, the last enzyme in the mitochondrial electron transport chain which drives oxidative phosphorylation. The respiratory chain contains 3 multisubunit complexes succinate dehydrogenase (complex II, CII), ubiquinol-cytochrome c oxidoreductase (cytochrome b-c1 complex, complex III, CIII) and cytochrome c oxidase (complex IV, CIV), that cooperate to transfer electrons derived from NADH and succinate to molecular oxygen, creating an electrochemical gradient over the inner membrane that drives transmembrane transport and the ATP synthase. Cytochrome c oxidase is the component of the respiratory chain that catalyzes the reduction of oxygen to water. Electrons originating from reduced cytochrome c in the intermembrane space (IMS) are transferred via the dinuclear copper A center (CU(A)) of subunit 2 and heme A of subunit 1 to the active site in subunit 1, a binuclear center (BNC) formed by heme A3 and copper B (CU(B)). The BNC reduces molecular oxygen to 2 water molecules using 4 electrons from cytochrome c in the IMS and 4 protons from the mitochondrial matrix. The sequence is that of Cytochrome c oxidase subunit 5A-2, mitochondrial from Thunnus obesus (Bigeye tuna).